A 418-amino-acid chain; its full sequence is IQ domain-containing protein C (418 aa).

In terms of domain architecture, IQ spans 6-35 (FLRKVSTLQAGFRGFLVRRQFQSLRAEYEA). 5 disordered regions span residues 101–142 (QKKT…SVSK), 230–264 (HHAE…KGRE), 280–299 (SQAG…QPFK), 327–355 (AETQ…AGPC), and 376–418 (GSLD…LQWR). 2 stretches are compositionally biased toward polar residues: residues 129–142 (KASQ…SVSK) and 249–259 (SVTSAGKTTAG). Positions 141-176 (SKMENADLGLSQSQQELQEQRNHLAMELLWLQQAIN) form a coiled coil. The segment covering 390 to 404 (PPSAGSSGHGNTSEL) has biased composition (polar residues).

This is IQ domain-containing protein C (Iqcc) from Mus musculus (Mouse).